The chain runs to 67 residues: Protein AaeX (67 aa).

The next 2 membrane-spanning stretches (helical) occupy residues 3–23 and 43–63; these read LFPV…ELIL and FVWH…YLIS.

This sequence belongs to the AaeX family.

The protein resides in the cell membrane. This chain is Protein AaeX, found in Enterobacter sp. (strain 638).